The following is a 988-amino-acid chain: Voltage-gated delayed rectifier potassium channel KCNH5 (988 aa).

Residues Met1–Trp217 lie on the Cytoplasmic side of the membrane. Residues Thr14–Asp86 enclose the PAS domain. The PAC domain occupies Asn91–Thr143. A helical membrane pass occupies residues Asp218–Phe238. At Lys239–Asn243 the chain is on the extracellular side. Residues Asn244–Leu264 traverse the membrane as a helical segment. At Asn265 to Thr291 the chain is on the cytoplasmic side. A helical transmembrane segment spans residues Trp292–Val312. At Asp313 to Leu319 the chain is on the extracellular side. The helical; Voltage-sensor transmembrane segment at Phe320–His340 threads the bilayer. Topologically, residues Tyr341–Ala346 are cytoplasmic. The chain crosses the membrane as a helical span at residues Ala347–Trp367. Residues Tyr368–Tyr419 lie on the Extracellular side of the membrane. The N-linked (GlcNAc...) asparagine glycan is linked to Asn403. Positions Val420–Pro440 form an intramembrane region, pore-forming. Residues Thr432–Asn437 carry the Selectivity filter motif. The Extracellular segment spans residues Thr441–Lys446. A helical transmembrane segment spans residues Met447–Val467. Residues Thr468–Phe988 are Cytoplasmic-facing. Ala550–Thr667 serves as a coordination point for a nucleoside 3',5'-cyclic phosphate. A calmodulin-binding region spans residues His704–Gln715. Residues Glu718–Gln742 form a disordered region. The segment covering Asn721–Gln742 has biased composition (polar residues). Lys785 participates in a covalent cross-link: Glycyl lysine isopeptide (Lys-Gly) (interchain with G-Cter in ubiquitin). 2 disordered regions span residues Leu839–Pro897 and Ser946–Ile965. Basic and acidic residues predominate over residues Ser871–Leu885. Residue Ser883 is modified to Phosphoserine. The interval Thr909 to Pro948 is CAD (involved in subunit assembly).

It belongs to the potassium channel family. H (Eag) (TC 1.A.1.20) subfamily. Kv10.2/KCNH5 sub-subfamily. In terms of assembly, homotetramer. The potassium channel is probably composed of a homo- or heterotetrameric complex of pore-forming alpha subunits that can associate with modulating beta subunits. Heteromultimer with KCNH1/EAG. As to expression, detected in adult testis and in embryonic and adult brain, but not in other tissues. Highly expressed in specific brain areas, such as neocortex, olfactory bulb, primary olfactory cortex and brain stem. In cortex, expression is concentrated in a narrow band toward the middle lamella (layer IV). Moderately expressed in spinal cord, dorsal thalamic nuclei, medial hypothalamus, colliculus, lateral lemniscus, pontine nuclei and Islands of Calleja.

Its subcellular location is the membrane. It catalyses the reaction K(+)(in) = K(+)(out). With respect to regulation, inhibited by low nanomolar concentrations of cytosolic calcium. Pore-forming (alpha) subunit of a voltage-gated delayed rectifier potassium channel that mediates outward-rectifying potassium currents which, on depolarization, reaches a steady-state level and do not inactivate. The kinetic is characterized by a slow activation time course and a small voltage dependence of the activation time constants, therefore, starts to open at more negative voltages. The activation kinetics depend on the prepulse potential and external divalent cation concentration. The time course of activation is biphasic with a fast and a slowly activating current component. With negative prepulses, the current activation is delayed and slowed down several fold, whereas more positive prepulses speed up activation, therefore the activation rate depends on holding potential. The polypeptide is Voltage-gated delayed rectifier potassium channel KCNH5 (Rattus norvegicus (Rat)).